Reading from the N-terminus, the 470-residue chain is MLTIYNTLTRKKEEFKPLHPGVVNMYVCGPTVYNYIHIGNARSAIAFDTVRRYLEFKGYKVNYVSNFTDVDDKMIKAAAEQGITVPQLAEKYINAFMEDTAAINIEPATLHPRATENITEIIKFVQGLIEKGYAYPKDGDVYYRARKFNHYGQLSGQSLDDLEVGASEHVSADEVNKKEDPLDFALWKAAKPGEISWDSPWGKGRPGWHIECSVMSTKYLGKTIDIHAGGQDLEFPHHENEIAQSEAETGQKFVRYWMHNGFVTIGKDNEKMSKSLHNFITVHEIIKEVDPQVLRFFMATTQYRRPIQYSQANLTDAQNNLNHIQTAFDNLTYREQDADEGDVQEVTDRLEQFHHQFITAMDDDINVQNGIATVYELVKYANVYAQQDNVSLGAIQAIKKELVELMSIFGVKLEASDNQINDEKIKQLIEERNIARKNKDFARSDEIRDNLKKQGIILEDTPQGTRYKKE.

Cys-28 is a binding site for Zn(2+). Residues 30-40 (PTVYNYIHIGN) carry the 'HIGH' region motif. Zn(2+) contacts are provided by Cys-212, His-237, and Glu-241. Residues 271–275 (KMSKS) carry the 'KMSKS' region motif. Lys-274 lines the ATP pocket.

This sequence belongs to the class-I aminoacyl-tRNA synthetase family. In terms of assembly, monomer. Requires Zn(2+) as cofactor.

Its subcellular location is the cytoplasm. It carries out the reaction tRNA(Cys) + L-cysteine + ATP = L-cysteinyl-tRNA(Cys) + AMP + diphosphate. The sequence is that of Cysteine--tRNA ligase from Limosilactobacillus reuteri (strain DSM 20016) (Lactobacillus reuteri).